Reading from the N-terminus, the 1799-residue chain is 1,3-beta-glucan synthase component FKS1 (1799 aa).

A compositionally biased stretch (pro residues) spans 1-11 (MSYPNPPPPPK). Residues 1-136 (MSYPNPPPPP…SNAGHRPRDP (136 aa)) are disordered. Positions 12 to 23 (GSASFSSSSSDP) are enriched in low complexity. Gly residues predominate over residues 51 to 64 (GAGGAGVAPPGQGG). The span at 91-101 (ASESGWSQNEP) shows a compositional bias: polar residues. The next 16 membrane-spanning stretches (helical) occupy residues 431–451 (IWVLHISVFWFFTAYNAPSIY), 470–490 (LGGFVATLIMIAATLAEFSYI), 504–524 (LIFLLIILAITGGPSIYIAFF), 530–550 (VALILGIVQFFCSVVATIAFA), 591–611 (FLLWFLVFGCKFTESYFFLTL), 648–668 (VMFVMDLTLFFLDTFLWYVIW), 1268–1288 (NILVMMSVQVFMLALVFLGTL), 1323–1343 (CIISIFIVFWIAFVPLFVQEL), 1422–1442 (LVLLLFITLTVWVPHLIYFWI), 1446–1466 (GLCVAPFLFNPHQFAIADFII), 1527–1547 (IGEIIGPICLAILFVICYLFI), 1563–1583 (IAIIALGPIVWNMALLITLFL), 1605–1625 (ALAHFGAVAGMLVFFELLWFL), 1635–1655 (LGIIAVISVQRCIFKFLIAVF), 1704–1724 (DFIACHLLLALLTIPMFIPYF), and 1762–1782 (GLLYLIIQGIFIALIVVPIIF).

Belongs to the glycosyltransferase 48 family. As to quaternary structure, component of the 1,3-beta-glucan synthase (GS) complex composed of a catalytic subunit FKS1 and a regulatory subunit RHO1.

The protein localises to the cell membrane. The enzyme catalyses [(1-&gt;3)-beta-D-glucosyl](n) + UDP-alpha-D-glucose = [(1-&gt;3)-beta-D-glucosyl](n+1) + UDP + H(+). Its activity is regulated as follows. Activated by magnesium ions. Inhibited by caspofungin and cilofungin. Catalytic subunit of the 1,3-beta-glucan synthase (GS) complex. Synthesizes 1,3-beta-glucan, a major structural component of the yeast cell wall. Involved in cell wall synthesis, maintenance and remodeling. This chain is 1,3-beta-glucan synthase component FKS1, found in Cryptococcus neoformans var. grubii serotype A (strain H99 / ATCC 208821 / CBS 10515 / FGSC 9487) (Filobasidiella neoformans var. grubii).